Consider the following 255-residue polypeptide: Shieldin complex subunit 3 (255 aa).

Residues 33-88 (QDFPTHPLPRFIPWFPYDESKLPLKPERLPPVISEEAAESVKQYLAISEPGVKSQS) form a sufficient for interaction with MAD2L2 region. The interval 116–135 (QTNAAHLDKNSGKEKQHKQR) is disordered.

As to quaternary structure, component of the shieldin complex, consisting of SHLD1, SHLD2, SHLD3 and MAD2L2/REV7. Within the complex, SHLD2 forms a scaffold which interacts with a SHLD3-MAD2L2 subcomplex via its N-terminus, and with SHLD1 via its C-terminus. Interacts with ASTE1.

Its subcellular location is the chromosome. Component of the shieldin complex, which plays an important role in repair of DNA double-stranded breaks (DSBs). During G1 and S phase of the cell cycle, the complex functions downstream of TP53BP1 to promote non-homologous end joining (NHEJ) and suppress DNA end resection. Mediates various NHEJ-dependent processes including immunoglobulin class-switch recombination, and fusion of unprotected telomeres. This chain is Shieldin complex subunit 3, found in Mus musculus (Mouse).